We begin with the raw amino-acid sequence, 567 residues long: Urease subunit alpha (567 aa).

The Urease domain occupies 129–567 (GGIDSHIHFI…LPLAQRYFLF (439 aa)). Ni(2+) is bound by residues His134, His136, and Lys217. The residue at position 217 (Lys217) is an N6-carboxylysine. His219 provides a ligand contact to substrate. His246 and His272 together coordinate Ni(2+). His320 (proton donor) is an active-site residue. Asp360 is a Ni(2+) binding site.

This sequence belongs to the metallo-dependent hydrolases superfamily. Urease alpha subunit family. As to quaternary structure, heterotrimer of UreA (gamma), UreB (beta) and UreC (alpha) subunits. Three heterotrimers associate to form the active enzyme. Requires Ni cation as cofactor. In terms of processing, carboxylation allows a single lysine to coordinate two nickel ions.

It is found in the cytoplasm. The catalysed reaction is urea + 2 H2O + H(+) = hydrogencarbonate + 2 NH4(+). It functions in the pathway nitrogen metabolism; urea degradation; CO(2) and NH(3) from urea (urease route): step 1/1. The sequence is that of Urease subunit alpha from Pseudomonas putida (strain W619).